Reading from the N-terminus, the 320-residue chain is Tyrosine recombinase XerC (320 aa).

Residues 14–104 (ADVREAVASW…SLRSFARHLE (91 aa)) enclose the Core-binding (CB) domain. The region spanning 125–311 (RLPRPLPVAA…DSARLMSAFE (187 aa)) is the Tyr recombinase domain. Active-site residues include Arg170, Lys195, His263, Arg266, and His289. Tyr298 acts as the O-(3'-phospho-DNA)-tyrosine intermediate in catalysis.

It belongs to the 'phage' integrase family. XerC subfamily. As to quaternary structure, forms a cyclic heterotetrameric complex composed of two molecules of XerC and two molecules of XerD.

It localises to the cytoplasm. Site-specific tyrosine recombinase, which acts by catalyzing the cutting and rejoining of the recombining DNA molecules. The XerC-XerD complex is essential to convert dimers of the bacterial chromosome into monomers to permit their segregation at cell division. It also contributes to the segregational stability of plasmids. This chain is Tyrosine recombinase XerC, found in Methylobacterium sp. (strain 4-46).